The primary structure comprises 214 residues: Reticulon-3-B (214 aa).

Residues 1-22 are disordered; that stretch reads MAETSGPQSSHISSSSAGDKGS. Residues 26–214 enclose the Reticulon domain; that stretch reads VRDLLYWRDV…LPGALKKKSE (189 aa). The next 2 helical transmembrane spans lie at 46–66 and 150–170; these read MVLLLSLAAFSIISVISYLVL and TYIGAVFNGITLLILGVLLAF.

In terms of assembly, homodimer.

Its subcellular location is the endoplasmic reticulum membrane. The protein resides in the golgi apparatus membrane. In terms of biological role, may be involved in membrane trafficking in the early secretory pathway. The sequence is that of Reticulon-3-B (rtn3-b) from Xenopus laevis (African clawed frog).